A 381-amino-acid polypeptide reads, in one-letter code: Pentatricopeptide repeat-containing protein 2, mitochondrial (381 aa).

Residues 159-193 (TSFNILMDMLFTKGKYERALQVLIEMKNQDVRFSK) form a PPR repeat. Ser375 bears the Phosphoserine mark.

It belongs to the PTCD2 family. High expression in heart and liver and low expression in kidney, brain and testis.

The protein localises to the mitochondrion. Functionally, involved in mitochondrial RNA maturation and mitochondrial respiratory chain function. This chain is Pentatricopeptide repeat-containing protein 2, mitochondrial (Ptcd2), found in Mus musculus (Mouse).